A 227-amino-acid polypeptide reads, in one-letter code: Cytochrome c oxidase subunit 2 (227 aa).

The Mitochondrial intermembrane portion of the chain corresponds to 1–14; the sequence is MAYPFQLGLQDASS. Residues 15-45 form a helical membrane-spanning segment; sequence PIMEELTNFHDHTLMIVFLISSLVLYIISSM. At 46-59 the chain is on the mitochondrial matrix side; that stretch reads LTTKMTHTSTMDAQ. A helical transmembrane segment spans residues 60–87; sequence EVETIWTVLPAVILILIALPSLRILYMM. The Mitochondrial intermembrane segment spans residues 88–227; sequence DEINNPVLTV…HFENWSTSMI (140 aa). Residues His-161, Cys-196, Glu-198, Cys-200, His-204, and Met-207 each coordinate Cu cation. Glu-198 is a Mg(2+) binding site.

Belongs to the cytochrome c oxidase subunit 2 family. In terms of assembly, component of the cytochrome c oxidase (complex IV, CIV), a multisubunit enzyme composed of 14 subunits. The complex is composed of a catalytic core of 3 subunits MT-CO1, MT-CO2 and MT-CO3, encoded in the mitochondrial DNA, and 11 supernumerary subunits COX4I, COX5A, COX5B, COX6A, COX6B, COX6C, COX7A, COX7B, COX7C, COX8 and NDUFA4, which are encoded in the nuclear genome. The complex exists as a monomer or a dimer and forms supercomplexes (SCs) in the inner mitochondrial membrane with NADH-ubiquinone oxidoreductase (complex I, CI) and ubiquinol-cytochrome c oxidoreductase (cytochrome b-c1 complex, complex III, CIII), resulting in different assemblies (supercomplex SCI(1)III(2)IV(1) and megacomplex MCI(2)III(2)IV(2)). Found in a complex with TMEM177, COA6, COX18, COX20, SCO1 and SCO2. Interacts with TMEM177 in a COX20-dependent manner. Interacts with COX20. Interacts with COX16. It depends on Cu cation as a cofactor.

The protein resides in the mitochondrion inner membrane. It catalyses the reaction 4 Fe(II)-[cytochrome c] + O2 + 8 H(+)(in) = 4 Fe(III)-[cytochrome c] + 2 H2O + 4 H(+)(out). Its function is as follows. Component of the cytochrome c oxidase, the last enzyme in the mitochondrial electron transport chain which drives oxidative phosphorylation. The respiratory chain contains 3 multisubunit complexes succinate dehydrogenase (complex II, CII), ubiquinol-cytochrome c oxidoreductase (cytochrome b-c1 complex, complex III, CIII) and cytochrome c oxidase (complex IV, CIV), that cooperate to transfer electrons derived from NADH and succinate to molecular oxygen, creating an electrochemical gradient over the inner membrane that drives transmembrane transport and the ATP synthase. Cytochrome c oxidase is the component of the respiratory chain that catalyzes the reduction of oxygen to water. Electrons originating from reduced cytochrome c in the intermembrane space (IMS) are transferred via the dinuclear copper A center (CU(A)) of subunit 2 and heme A of subunit 1 to the active site in subunit 1, a binuclear center (BNC) formed by heme A3 and copper B (CU(B)). The BNC reduces molecular oxygen to 2 water molecules using 4 electrons from cytochrome c in the IMS and 4 protons from the mitochondrial matrix. The polypeptide is Cytochrome c oxidase subunit 2 (MT-CO2) (Lophuromys flavopunctatus (Yellow-spotted brush-furred rat)).